An 853-amino-acid chain; its full sequence is Thrombospondin type-1 domain-containing protein 1 (853 aa).

A signal peptide spans 1-24; that stretch reads MKPMLKDFSNLLLVVLCDYVLGEA. Over 25–414 the chain is Extracellular; that stretch reads EYLLLREPGH…QPQGPVKSNN (390 aa). Residues asparagine 39, asparagine 53, asparagine 58, asparagine 69, asparagine 80, asparagine 135, and asparagine 304 are each glycosylated (N-linked (GlcNAc...) asparagine). The TSP type-1 domain occupies 341–394; that stretch reads IETWGLWQPWSQCSATCGDGVRERRRVCLTSFPSRPGCPGMSLEASLCSLEECA. Disulfide bonds link cysteine 353/cysteine 388, cysteine 357/cysteine 393, and cysteine 368/cysteine 378. Residues 415-435 traverse the membrane as a helical segment; the sequence is IVTVTGISLCLFIIIATVLIT. The Cytoplasmic portion of the chain corresponds to 436–853; sequence LWRRFGRPAK…STLSVEKLVI (418 aa). 4 disordered regions span residues 445–518, 624–650, 668–702, and 714–800; these read KCST…ESFQ, TLIR…RNAH, ERSM…QSRG, and QEAS…RKDK. Serine 464 carries the post-translational modification Phosphoserine. Residues 671–686 show a composition bias toward polar residues; the sequence is MSTLTPRQAPAYSTRT. The span at 687-697 shows a compositional bias: basic and acidic residues; that stretch reads RTCEQAEDRFR. Polar residues predominate over residues 767–795; it reads SHKSVSRKQSSPTSPKDSYQRVSPLSPSQ.

As to quaternary structure, part of a complex composed of THSD1, PTK2/FAK1, TLN1 and VCL. Interacts with TLN1.

Its subcellular location is the endosome membrane. It localises to the cell junction. The protein resides in the focal adhesion. Its function is as follows. Is a positive regulator of nascent focal adhesion assembly, involved in the modulation of endothelial cell attachment to the extracellular matrix. This Pongo abelii (Sumatran orangutan) protein is Thrombospondin type-1 domain-containing protein 1 (THSD1).